A 129-amino-acid chain; its full sequence is Small ribosomal subunit protein uS11 (129 aa).

It belongs to the universal ribosomal protein uS11 family. Part of the 30S ribosomal subunit. Interacts with proteins S7 and S18. Binds to IF-3.

Functionally, located on the platform of the 30S subunit, it bridges several disparate RNA helices of the 16S rRNA. Forms part of the Shine-Dalgarno cleft in the 70S ribosome. The sequence is that of Small ribosomal subunit protein uS11 from Histophilus somni (strain 129Pt) (Haemophilus somnus).